We begin with the raw amino-acid sequence, 215 residues long: Flavin-dependent thymidylate synthase (215 aa).

Residues 1 to 215 (MDVRFISLTK…FPTVAAALEW (215 aa)) enclose the ThyX domain. FAD-binding positions include Ser-56, 79 to 81 (RHR), and Glu-87. DUMP contacts are provided by residues 76–79 (QILR), 87–91 (EFSLR), and Arg-155. Positions 79–89 (RHRSFSFQEFS) match the ThyX motif motif. His-177 is an FAD binding site. Residue Arg-182 participates in dUMP binding. Arg-182 acts as the Involved in ionization of N3 of dUMP, leading to its activation in catalysis.

This sequence belongs to the thymidylate synthase ThyX family. In terms of assembly, homotetramer. The cofactor is FAD.

It carries out the reaction dUMP + (6R)-5,10-methylene-5,6,7,8-tetrahydrofolate + NADPH + H(+) = dTMP + (6S)-5,6,7,8-tetrahydrofolate + NADP(+). It participates in pyrimidine metabolism; dTTP biosynthesis. Its function is as follows. Catalyzes the reductive methylation of 2'-deoxyuridine-5'-monophosphate (dUMP) to 2'-deoxythymidine-5'-monophosphate (dTMP) while utilizing 5,10-methylenetetrahydrofolate (mTHF) as the methyl donor, and NADPH and FADH(2) as the reductant. In Synechocystis sp. (strain ATCC 27184 / PCC 6803 / Kazusa), this protein is Flavin-dependent thymidylate synthase.